We begin with the raw amino-acid sequence, 493 residues long: Dipeptide permease D (493 aa).

The next 13 membrane-spanning stretches (helical) occupy residues 14 to 34 (VVALQIWEYFSFYGMRALLIL), 49 to 69 (ELFSAYCSLVYVTPILGGYLA), 91 to 111 (LVLGASEIAPTFLYLSLAIIV), 138 to 158 (GGFSLLYAAGNIGSIVAPIAC), 167 to 187 (WAMGFALAAIGMLAGLVIFLC), 212 to 232 (NWGWLLILLVAAPLLITVLFW), 235 to 255 (WSVYALIVATAISLVVLAKIY), 267 to 287 (LGLIVTLTLFSMLFWAFAQQG), 312 to 332 (MFQSVNAFAVMLCGVVLAWLV), 344 to 364 (IWGKFALGLGLMSAGFCILTL), 379 to 399 (LMVLGLAVMGFAELFIDPVAM), 413 to 433 (VLTGIYMLLSGAIANYLAGVI), and 458 to 478 (VFEQITWGALACVGVVLLIWL).

It belongs to the major facilitator superfamily. Proton-dependent oligopeptide transporter (POT/PTR) (TC 2.A.17) family. DtpD subfamily.

Its subcellular location is the cell inner membrane. Functionally, probable proton-dependent permease that transports dipeptides. The protein is Dipeptide permease D of Salmonella paratyphi C (strain RKS4594).